We begin with the raw amino-acid sequence, 351 residues long: 4-hydroxy-3-methylbut-2-enyl diphosphate reductase (351 aa).

Residue cysteine 18 coordinates [4Fe-4S] cluster. Residues histidine 47 and histidine 83 each contribute to the (2E)-4-hydroxy-3-methylbut-2-enyl diphosphate site. Residues histidine 47 and histidine 83 each coordinate dimethylallyl diphosphate. Residues histidine 47 and histidine 83 each coordinate isopentenyl diphosphate. Cysteine 105 provides a ligand contact to [4Fe-4S] cluster. Residue histidine 133 participates in (2E)-4-hydroxy-3-methylbut-2-enyl diphosphate binding. Histidine 133 is a binding site for dimethylallyl diphosphate. Histidine 133 provides a ligand contact to isopentenyl diphosphate. Glutamate 135 serves as the catalytic Proton donor. Residue threonine 174 participates in (2E)-4-hydroxy-3-methylbut-2-enyl diphosphate binding. [4Fe-4S] cluster is bound at residue cysteine 204. (2E)-4-hydroxy-3-methylbut-2-enyl diphosphate is bound by residues serine 232, serine 233, asparagine 234, and serine 277. Residues serine 232, serine 233, asparagine 234, and serine 277 each contribute to the dimethylallyl diphosphate site. Isopentenyl diphosphate contacts are provided by serine 232, serine 233, asparagine 234, and serine 277.

This sequence belongs to the IspH family. [4Fe-4S] cluster serves as cofactor.

The enzyme catalyses isopentenyl diphosphate + 2 oxidized [2Fe-2S]-[ferredoxin] + H2O = (2E)-4-hydroxy-3-methylbut-2-enyl diphosphate + 2 reduced [2Fe-2S]-[ferredoxin] + 2 H(+). The catalysed reaction is dimethylallyl diphosphate + 2 oxidized [2Fe-2S]-[ferredoxin] + H2O = (2E)-4-hydroxy-3-methylbut-2-enyl diphosphate + 2 reduced [2Fe-2S]-[ferredoxin] + 2 H(+). It functions in the pathway isoprenoid biosynthesis; dimethylallyl diphosphate biosynthesis; dimethylallyl diphosphate from (2E)-4-hydroxy-3-methylbutenyl diphosphate: step 1/1. Its pathway is isoprenoid biosynthesis; isopentenyl diphosphate biosynthesis via DXP pathway; isopentenyl diphosphate from 1-deoxy-D-xylulose 5-phosphate: step 6/6. Functionally, catalyzes the conversion of 1-hydroxy-2-methyl-2-(E)-butenyl 4-diphosphate (HMBPP) into a mixture of isopentenyl diphosphate (IPP) and dimethylallyl diphosphate (DMAPP). Acts in the terminal step of the DOXP/MEP pathway for isoprenoid precursor biosynthesis. The protein is 4-hydroxy-3-methylbut-2-enyl diphosphate reductase of Bartonella tribocorum (strain CIP 105476 / IBS 506).